The following is a 181-amino-acid chain: Ribonuclease M5 (181 aa).

A Toprim domain is found at 3–86 (KEVIVVEGRD…AYISQEEGTK (84 aa)). Glu-9, Asp-55, and Asp-57 together coordinate Mg(2+).

This sequence belongs to the ribonuclease M5 family. Requires Mg(2+) as cofactor.

Its subcellular location is the cytoplasm. The catalysed reaction is Endonucleolytic cleavage of RNA, removing 21 and 42 nucleotides, respectively, from the 5'- and 3'-termini of a 5S-rRNA precursor.. Required for correct processing of both the 5' and 3' ends of 5S rRNA precursor. Cleaves both sides of a double-stranded region yielding mature 5S rRNA in one step. The protein is Ribonuclease M5 of Clostridium botulinum (strain Hall / ATCC 3502 / NCTC 13319 / Type A).